Consider the following 102-residue polypeptide: MAKKSMIQKNLRRIKLCDQYRERREELKSIMNNKDLSIAKRFAAQSKLIKKLPRDSSKIRIRNRCALTGRPRGVYRKFGLCRIVLRDLCSFGQVPGVTKSSW.

This sequence belongs to the universal ribosomal protein uS14 family. Part of the 30S ribosomal subunit. Contacts proteins S3 and S10.

Binds 16S rRNA, required for the assembly of 30S particles and may also be responsible for determining the conformation of the 16S rRNA at the A site. The chain is Small ribosomal subunit protein uS14 from Wolbachia pipientis subsp. Culex pipiens (strain wPip).